A 649-amino-acid polypeptide reads, in one-letter code: Probable potassium transport system protein Kup (649 aa).

The next 12 helical transmembrane spans lie at 1-21 (MAIV…LYTM), 42-62 (ILSL…VFIA), 84-104 (GAWL…DSVL), 126-146 (IMSG…VCLF), 159-179 (TFGT…LVNL), 195-215 (VEFL…TVFL), 235-255 (IYFT…GQGA), 286-306 (VAVL…ITGA), 334-354 (LYIP…LAMF), 364-384 (YGLA…VYIW), 390-410 (VGAV…FFAS), and 414-434 (FLHG…IMYT).

It belongs to the HAK/KUP transporter (TC 2.A.72) family.

The protein localises to the cell membrane. It carries out the reaction K(+)(in) + H(+)(in) = K(+)(out) + H(+)(out). Its function is as follows. Transport of potassium into the cell. Likely operates as a K(+):H(+) symporter. The sequence is that of Probable potassium transport system protein Kup from Bifidobacterium adolescentis (strain ATCC 15703 / DSM 20083 / NCTC 11814 / E194a).